A 213-amino-acid polypeptide reads, in one-letter code: Uracil phosphoribosyltransferase (213 aa).

Residues R78, R103, and 130–138 contribute to the 5-phospho-alpha-D-ribose 1-diphosphate site; that span reads DPMLATGGT. Residues I197 and 202-204 each bind uracil; that span reads GDA. D203 contributes to the 5-phospho-alpha-D-ribose 1-diphosphate binding site.

It belongs to the UPRTase family. It depends on Mg(2+) as a cofactor.

The catalysed reaction is UMP + diphosphate = 5-phospho-alpha-D-ribose 1-diphosphate + uracil. The protein operates within pyrimidine metabolism; UMP biosynthesis via salvage pathway; UMP from uracil: step 1/1. Its activity is regulated as follows. Allosterically activated by GTP. In terms of biological role, catalyzes the conversion of uracil and 5-phospho-alpha-D-ribose 1-diphosphate (PRPP) to UMP and diphosphate. In Nocardioides sp. (strain ATCC BAA-499 / JS614), this protein is Uracil phosphoribosyltransferase.